The primary structure comprises 147 residues: MPTYAPKAGDTTRSWYVIDATDVVLGRLAVAAANLLRGKHKPTFAPNVDGGDFVIVVNADKVAFSGQKLDKKLAYRHSGYPGGLRSRTIGELMQKHPDRVVADAIVGMLPKNKLSRQIQRKLRVYAGPEHPHTAQQPIPYEIKQVAQ.

It belongs to the universal ribosomal protein uL13 family. Part of the 50S ribosomal subunit.

Its function is as follows. This protein is one of the early assembly proteins of the 50S ribosomal subunit, although it is not seen to bind rRNA by itself. It is important during the early stages of 50S assembly. The chain is Large ribosomal subunit protein uL13 from Mycolicibacterium paratuberculosis (strain ATCC BAA-968 / K-10) (Mycobacterium paratuberculosis).